A 375-amino-acid chain; its full sequence is UPF0612 protein C569.003 (375 aa).

It belongs to the UPF0612 family.

The protein localises to the cytoplasm. This chain is UPF0612 protein C569.003, found in Schizosaccharomyces pombe (strain 972 / ATCC 24843) (Fission yeast).